The following is a 114-amino-acid chain: MEKPLFPLVPLHWFGFGYTALVVSGGIVGYVKTGSVPSLAAGLLFGSLAGLGAYQLYQDPRNVWGFLAATSVTFVGVMGMRSYYYGKFMPVGLIAGASLLMAAKVGVRMLMTSD.

4 helical membrane passes run 8–28 (LVPL…GGIV), 34–54 (GSVP…LGAY), 60–80 (PRNV…VMGM), and 83–103 (YYYG…LMAA).

It belongs to the TMEM14 family. As to quaternary structure, interacts with IQGAP1; this interaction promotes phosphorylation and nuclear translocation of IQGAP1. As to expression, mainly expressed in the outer subventricular zone (OSVZ) of the fetal brains.

The protein resides in the membrane. Functionally, primate-specific protein involved in cortical expansion and folding in the developing neocortex. May drive neural progenitor proliferation through nuclear translocation of IQGAP1, which in turn promotes G1/S cell cycle transitions. The protein is Transmembrane protein 14B (TMEM14B) of Homo sapiens (Human).